The chain runs to 166 residues: Large ribosomal subunit protein uL10 (166 aa).

The protein belongs to the universal ribosomal protein uL10 family. Part of the ribosomal stalk of the 50S ribosomal subunit. The N-terminus interacts with L11 and the large rRNA to form the base of the stalk. The C-terminus forms an elongated spine to which L12 dimers bind in a sequential fashion forming a multimeric L10(L12)X complex.

Functionally, forms part of the ribosomal stalk, playing a central role in the interaction of the ribosome with GTP-bound translation factors. The polypeptide is Large ribosomal subunit protein uL10 (Flavobacterium psychrophilum (strain ATCC 49511 / DSM 21280 / CIP 103535 / JIP02/86)).